A 172-amino-acid chain; its full sequence is Protein LOL2 (172 aa).

Putative zinc finger regions lie at residues 4 to 34 (QIVC…VSST), 44 to 74 (HLIC…VNLV), and 82 to 112 (HLNC…ITNT).

Its subcellular location is the nucleus. Functionally, putative zinc finger that may be involved in programmed cell death and defense response. This Oryza sativa subsp. japonica (Rice) protein is Protein LOL2 (LOL2).